A 379-amino-acid chain; its full sequence is Carbamoyl phosphate synthase small chain (379 aa).

The tract at residues methionine 1–glutamate 189 is CPSase. Residues serine 47, glycine 241, and glycine 243 each coordinate L-glutamine. In terms of domain architecture, Glutamine amidotransferase type-1 spans histidine 193–alanine 379. Cysteine 269 serves as the catalytic Nucleophile. L-glutamine-binding residues include leucine 270, glutamine 273, asparagine 311, glycine 313, and phenylalanine 314. Catalysis depends on residues histidine 353 and glutamate 355.

It belongs to the CarA family. Composed of two chains; the small (or glutamine) chain promotes the hydrolysis of glutamine to ammonia, which is used by the large (or ammonia) chain to synthesize carbamoyl phosphate. Tetramer of heterodimers (alpha,beta)4.

It carries out the reaction hydrogencarbonate + L-glutamine + 2 ATP + H2O = carbamoyl phosphate + L-glutamate + 2 ADP + phosphate + 2 H(+). The enzyme catalyses L-glutamine + H2O = L-glutamate + NH4(+). It functions in the pathway amino-acid biosynthesis; L-arginine biosynthesis; carbamoyl phosphate from bicarbonate: step 1/1. The protein operates within pyrimidine metabolism; UMP biosynthesis via de novo pathway; (S)-dihydroorotate from bicarbonate: step 1/3. Small subunit of the glutamine-dependent carbamoyl phosphate synthetase (CPSase). CPSase catalyzes the formation of carbamoyl phosphate from the ammonia moiety of glutamine, carbonate, and phosphate donated by ATP, constituting the first step of 2 biosynthetic pathways, one leading to arginine and/or urea and the other to pyrimidine nucleotides. The small subunit (glutamine amidotransferase) binds and cleaves glutamine to supply the large subunit with the substrate ammonia. This chain is Carbamoyl phosphate synthase small chain, found in Vibrio vulnificus (strain YJ016).